The primary structure comprises 375 residues: Anhydro-N-acetylmuramic acid kinase (375 aa).

19 to 26 contributes to the ATP binding site; that stretch reads GTSLDGVD.

The protein belongs to the anhydro-N-acetylmuramic acid kinase family.

It carries out the reaction 1,6-anhydro-N-acetyl-beta-muramate + ATP + H2O = N-acetyl-D-muramate 6-phosphate + ADP + H(+). Its pathway is amino-sugar metabolism; 1,6-anhydro-N-acetylmuramate degradation. The protein operates within cell wall biogenesis; peptidoglycan recycling. In terms of biological role, catalyzes the specific phosphorylation of 1,6-anhydro-N-acetylmuramic acid (anhMurNAc) with the simultaneous cleavage of the 1,6-anhydro ring, generating MurNAc-6-P. Is required for the utilization of anhMurNAc either imported from the medium or derived from its own cell wall murein, and thus plays a role in cell wall recycling. The chain is Anhydro-N-acetylmuramic acid kinase from Ruegeria sp. (strain TM1040) (Silicibacter sp.).